Consider the following 177-residue polypeptide: Nucleoside triphosphate/diphosphate phosphatase (177 aa).

Arg-23 (proton donor) is an active-site residue. Residues Asn-87, Asp-103, Asp-105, Asp-107, Asp-120, and Glu-123 each contribute to the Mg(2+) site.

It belongs to the Ntdp family. The cofactor is Mg(2+).

The enzyme catalyses a ribonucleoside 5'-triphosphate + H2O = a ribonucleoside 5'-diphosphate + phosphate + H(+). It catalyses the reaction a ribonucleoside 5'-diphosphate + H2O = a ribonucleoside 5'-phosphate + phosphate + H(+). In terms of biological role, has nucleoside phosphatase activity towards nucleoside triphosphates and nucleoside diphosphates. This chain is Nucleoside triphosphate/diphosphate phosphatase, found in Streptococcus gordonii (strain Challis / ATCC 35105 / BCRC 15272 / CH1 / DL1 / V288).